A 318-amino-acid polypeptide reads, in one-letter code: MGLVCFPDTQDKIPSIPVHLTRVGVTGVKKLLKIEREGRRPIILLPTFDAFVDLPSKQRGIHMSRNPEAISDVLEEVVENNALELESLCAEIVNELLKKHRYARRAEVSMNSDFMFMKRSPVTRRKSQEMTKIMADAIGYRDDDGIVIRKMIGAEVVGMTVCPCAQESVREASRQKLLEFLDDETVERVLDCVSFASHNQSGRGMIMIEVPEDQTIRAEKLIDIIESSMSSPVYELLKRPDENAVVMSAHENPMFVEDCVRNMVHRIVSEYPHLPDDTIVTVRQINEESIHRHNAFAEKVATMGELRYEIEELNGAGS.

The protein belongs to the GTP cyclohydrolase IV family. As to quaternary structure, homodimer. Fe(2+) is required as a cofactor.

It catalyses the reaction GTP + H2O = 7,8-dihydroneopterin 2',3'-cyclic phosphate + formate + diphosphate + H(+). It participates in cofactor biosynthesis; 5,6,7,8-tetrahydromethanopterin biosynthesis. Its function is as follows. Converts GTP to 7,8-dihydro-D-neopterin 2',3'-cyclic phosphate, the first intermediate in the biosynthesis of coenzyme methanopterin. In Methanothermobacter thermautotrophicus (strain ATCC 29096 / DSM 1053 / JCM 10044 / NBRC 100330 / Delta H) (Methanobacterium thermoautotrophicum), this protein is GTP cyclohydrolase MptA.